The following is a 116-amino-acid chain: Fluoride-specific ion channel FluC 2 (116 aa).

Transmembrane regions (helical) follow at residues 3–23 (LLTA…RYAV) and 43–63 (LLFG…AVTV). Positions 67 and 70 each coordinate Na(+). Residues 96-116 (VGTLAAALLAVFLGIALGAAL) traverse the membrane as a helical segment.

Belongs to the fluoride channel Fluc/FEX (TC 1.A.43) family.

The protein resides in the cell membrane. It carries out the reaction fluoride(in) = fluoride(out). With respect to regulation, na(+) is not transported, but it plays an essential structural role and its presence is essential for fluoride channel function. Fluoride-specific ion channel. Important for reducing fluoride concentration in the cell, thus reducing its toxicity. This is Fluoride-specific ion channel FluC 2 from Natronomonas pharaonis (strain ATCC 35678 / DSM 2160 / CIP 103997 / JCM 8858 / NBRC 14720 / NCIMB 2260 / Gabara) (Halobacterium pharaonis).